We begin with the raw amino-acid sequence, 93 residues long: Small ribosomal subunit protein bS20 (93 aa).

The tract at residues 72–93 (KNTASRKKSRLTRKFNSVYKAS) is disordered. The segment covering 74 to 84 (TASRKKSRLTR) has biased composition (basic residues).

It belongs to the bacterial ribosomal protein bS20 family.

Binds directly to 16S ribosomal RNA. The chain is Small ribosomal subunit protein bS20 from Carboxydothermus hydrogenoformans (strain ATCC BAA-161 / DSM 6008 / Z-2901).